The sequence spans 451 residues: Probable tyrosyl-DNA phosphodiesterase (451 aa).

Positions 1–34 are disordered; that stretch reads MKRTIQETPGPSSTTVPPPKKLNSQRNGSNLEPG. The segment covering 22–32 has biased composition (polar residues); that stretch reads LNSQRNGSNLE. Residue H131 is the Nucleophile of the active site. K133 provides a ligand contact to substrate. Positions 266–269 are interaction with DNA; it reads SIGS. H356 (proton donor/acceptor) is an active-site residue. Residue K358 participates in substrate binding.

Belongs to the tyrosyl-DNA phosphodiesterase family.

The protein localises to the nucleus. Its function is as follows. DNA repair enzyme that can remove a variety of covalent adducts from DNA through hydrolysis of a 3'-phosphodiester bond, giving rise to DNA with a free 3' phosphate. Catalyzes the hydrolysis of dead-end complexes between DNA and the topoisomerase I active site tyrosine residue. Hydrolyzes 3'-phosphoglycolates on protruding 3' ends on DNA double-strand breaks due to DNA damage by radiation and free radicals. Acts on blunt-ended double-strand DNA breaks and on single-stranded DNA. May have low 3'exonuclease activity and may be able to remove a single nucleoside from the 3'end of DNA and RNA molecules with 3'hydroxyl groups. Has no exonuclease activity towards DNA or RNA with a 3'phosphate. This Caenorhabditis elegans protein is Probable tyrosyl-DNA phosphodiesterase.